Reading from the N-terminus, the 285-residue chain is Acetyl-coenzyme A carboxylase carboxyl transferase subunit beta (285 aa).

Positions L22–V285 constitute a CoA carboxyltransferase N-terminal domain. The Zn(2+) site is built by C26, C29, C45, and C48. A C4-type zinc finger spans residues C26–C48.

The protein belongs to the AccD/PCCB family. Acetyl-CoA carboxylase is a heterohexamer composed of biotin carboxyl carrier protein (AccB), biotin carboxylase (AccC) and two subunits each of ACCase subunit alpha (AccA) and ACCase subunit beta (AccD). Zn(2+) serves as cofactor.

Its subcellular location is the cytoplasm. The catalysed reaction is N(6)-carboxybiotinyl-L-lysyl-[protein] + acetyl-CoA = N(6)-biotinyl-L-lysyl-[protein] + malonyl-CoA. It functions in the pathway lipid metabolism; malonyl-CoA biosynthesis; malonyl-CoA from acetyl-CoA: step 1/1. Component of the acetyl coenzyme A carboxylase (ACC) complex. Biotin carboxylase (BC) catalyzes the carboxylation of biotin on its carrier protein (BCCP) and then the CO(2) group is transferred by the transcarboxylase to acetyl-CoA to form malonyl-CoA. The protein is Acetyl-coenzyme A carboxylase carboxyl transferase subunit beta of Thermus thermophilus (strain ATCC 27634 / DSM 579 / HB8).